The following is a 95-amino-acid chain: Antitoxin VapB41 (95 aa).

In terms of biological role, antitoxin component of a type II toxin-antitoxin (TA) system. This is Antitoxin VapB41 (vapB41) from Mycobacterium tuberculosis (strain CDC 1551 / Oshkosh).